Consider the following 347-residue polypeptide: NADH-ubiquinone oxidoreductase chain 2 (347 aa).

Helical transmembrane passes span 3–23, 59–79, 93–115, 150–170, 178–198, 200–220, 240–260, 274–294, and 326–346; these read PLAL…TMMS, YFMT…INLM, VASN…HFWV, NTNL…WGGL, ILAY…PFNP, LTLL…MILA, MTIM…LSGF, NSII…YFYT, and LPTL…ISML.

The protein belongs to the complex I subunit 2 family. As to quaternary structure, core subunit of respiratory chain NADH dehydrogenase (Complex I) which is composed of 45 different subunits. Interacts with TMEM242.

The protein localises to the mitochondrion inner membrane. The catalysed reaction is a ubiquinone + NADH + 5 H(+)(in) = a ubiquinol + NAD(+) + 4 H(+)(out). In terms of biological role, core subunit of the mitochondrial membrane respiratory chain NADH dehydrogenase (Complex I) which catalyzes electron transfer from NADH through the respiratory chain, using ubiquinone as an electron acceptor. Essential for the catalytic activity and assembly of complex I. In Elephas maximus (Indian elephant), this protein is NADH-ubiquinone oxidoreductase chain 2.